A 520-amino-acid chain; its full sequence is Hydroxymethylglutaryl-CoA synthase, cytoplasmic (520 aa).

Ser4 is modified (phosphoserine). Residue Ala44 coordinates (3S)-3-hydroxy-3-methylglutaryl-CoA. Ala44–Lys46 lines the CoA pocket. Lys46 is subject to N6-acetyllysine. Glu95 (proton donor/acceptor) is an active-site residue. Cys129, Asn167, Thr171, Ser221, and His264 together coordinate (3S)-3-hydroxy-3-methylglutaryl-CoA. Cys129 acts as the Acyl-thioester intermediate in catalysis. Position 167 (Asn167) interacts with CoA. Residue Ser221 coordinates CoA. His264 serves as the catalytic Proton donor/acceptor. CoA-binding residues include Lys269 and Lys273. (3S)-3-hydroxy-3-methylglutaryl-CoA contacts are provided by Lys273, Asn343, and Ser377. Lys273 is modified (N6-acetyllysine). Phosphothreonine is present on Thr476. Residues His492–His520 are disordered. 2 positions are modified to phosphoserine: Ser495 and Ser516.

It belongs to the thiolase-like superfamily. HMG-CoA synthase family. In terms of assembly, homodimer.

The protein localises to the cytoplasm. It catalyses the reaction acetoacetyl-CoA + acetyl-CoA + H2O = (3S)-3-hydroxy-3-methylglutaryl-CoA + CoA + H(+). It functions in the pathway metabolic intermediate biosynthesis; (R)-mevalonate biosynthesis; (R)-mevalonate from acetyl-CoA: step 2/3. Catalyzes the condensation of acetyl-CoA with acetoacetyl-CoA to form HMG-CoA, which is converted by HMG-CoA reductase (HMGCR) into mevalonate, a precursor for cholesterol synthesis. This Pongo abelii (Sumatran orangutan) protein is Hydroxymethylglutaryl-CoA synthase, cytoplasmic.